Here is a 619-residue protein sequence, read N- to C-terminus: Sorting nexin-41 (619 aa).

The disordered stretch occupies residues 1–95; sequence MWNDEDNNPY…ELVPRRKPGG (95 aa). The PX domain maps to 108–224; the sequence is PELPILITEA…WRFLDPNSSW (117 aa). Arg142, Ser144, Lys168, and Arg191 together coordinate a 1,2-diacyl-sn-glycero-3-phospho-(1D-myo-inositol-3-phosphate). The segment at 444–510 is disordered; sequence YLSSSQQIQP…GSPSHKKAAS (67 aa). The segment covering 454–467 has biased composition (basic and acidic residues); sequence PRREPPAQHRRDGS.

It belongs to the sorting nexin family.

The protein localises to the endosome membrane. Its subcellular location is the endomembrane system. May be required for cytoplasm to vacuole transport (Cvt) and pexophagy. This Neurospora crassa (strain ATCC 24698 / 74-OR23-1A / CBS 708.71 / DSM 1257 / FGSC 987) protein is Sorting nexin-41 (vsp-6).